The following is an 869-amino-acid chain: TATA box-binding protein-associated factor RNA polymerase I subunit C (869 aa).

2 disordered regions span residues 605-629 and 729-869; these read SSLR…ASWT and GAAW…RMGF. Phosphothreonine is present on threonine 834. Polar residues predominate over residues 835–860; sequence PPHSQASSVRATRSQQHTPVLSSSQP. At serine 848 the chain carries Phosphoserine.

Component of the transcription factor SL1/TIF-IB complex, composed of TBP and at least TAF1A, TAF1B, TAF1C and TAF1D. In the complex interacts directly with TBP, TAF1A and TAF1B. Interaction of the SL1/TIF-IB subunits with TBP excludes interaction of TBP with the transcription factor IID (TFIID) subunits. Interacts with MYC and RRN3. Interacts with p53/TP53; the interaction prevents the association of SL1/TIF-IB with UBTF and represses RNA polymerase I transcription. Part of Pol I pre-initiation complex (PIC), in which Pol I core assembles with RRN3 and promoter-bound UTBF and SL1/TIF-IB complex.

Its subcellular location is the nucleus. The protein localises to the nucleolus. Its function is as follows. Component of the transcription factor SL1/TIF-IB complex, which is involved in the assembly of the PIC (pre-initiation complex) during RNA polymerase I-dependent transcription. The rate of PIC formation probably is primarily dependent on the rate of association of SL1/TIF-IB with the rDNA promoter. SL1/TIF-IB is involved in stabilization of nucleolar transcription factor 1/UBTF on rDNA. Formation of SL1/TIF-IB excludes the association of TBP with TFIID subunits. Recruits RNA polymerase I to the rRNA gene promoter via interaction with RRN3. This chain is TATA box-binding protein-associated factor RNA polymerase I subunit C (TAF1C), found in Homo sapiens (Human).